The sequence spans 180 residues: Ribulose bisphosphate carboxylase small subunit 1A, chloroplastic (180 aa).

The transit peptide at 1-54 (MASSMLSSATMVASPAQATMVAPFNGLKSSAAFPATRKANNDITSITSNGGRVN) directs the protein to the chloroplast. Ser113 bears the Phosphoserine mark.

This sequence belongs to the RuBisCO small chain family. In terms of assembly, heterohexadecamer of 8 large and 8 small subunits.

The protein localises to the plastid. It localises to the chloroplast membrane. The protein resides in the chloroplast stroma. In terms of biological role, ruBisCO catalyzes two reactions: the carboxylation of D-ribulose 1,5-bisphosphate, the primary event in carbon dioxide fixation, as well as the oxidative fragmentation of the pentose substrate. Both reactions occur simultaneously and in competition at the same active site. Although the small subunit is not catalytic it is essential for maximal activity. This is Ribulose bisphosphate carboxylase small subunit 1A, chloroplastic (RBCS-1A) from Arabidopsis thaliana (Mouse-ear cress).